The chain runs to 468 residues: Peripherin (468 aa).

Residues 1 to 16 are compositionally biased toward low complexity; that stretch reads MSHHSSGLRSSISSTS. The interval 1–22 is disordered; it reads MSHHSSGLRSSISSTSYRRTFG. The segment at 1–96 is head; sequence MSHHSSGLRS…FLATRSNEKQ (96 aa). Position 17 is a 3'-nitrotyrosine (Tyr-17). Phosphoserine is present on residues Ser-28, Ser-50, and Ser-59. Residues 94–404 enclose the IF rod domain; the sequence is EKQELQELND…KLLEGEESRI (311 aa). The tract at residues 97 to 129 is coil 1A; it reads ELQELNDRFANFIEKVRFLEQQNAALRGELSQA. Positions 130 to 140 are linker 1; it reads RGQEPARADQL. Positions 141–236 are coil 1B; the sequence is CQQELRELRR…KLHEEELRDL (96 aa). Residues 237-259 are linker 2; that stretch reads QVSVESQQVQQVEVEATVKPELT. The segment at 260 to 402 is coil 2; the sequence is AALRDIRAQY…YRKLLEGEES (143 aa). Tyr-376 carries the 3'-nitrotyrosine modification. Residues 403–468 are tail; sequence RISVPVHSFA…ELDKSSIHSY (66 aa). Residues 445 to 468 are disordered; that stretch reads GEKVVTESQKEQHSELDKSSIHSY. At Tyr-468 the chain carries Phosphotyrosine.

It belongs to the intermediate filament family. As to quaternary structure, forms homodimers (in vitro). Homopolymerizes into a filamentous network (in vitro). Forms heterodimers with NEFL, NEFM or NEFH (in vitro). Interacts with DST (via C-terminus). Interacts with RAB7A; the interaction is direct. Interacts with PRKCE (via phorbol-ester/DAG-type 2 domain). Post-translationally, phosphorylated; phosphorylation increases after nerve injury in regenerating neurons. Expressed in hypoglossal motor neurons (at protein level). Expressed in the small and large sensory neurons of the dorsal root ganglion (at protein level). Expressed in cutaneous and muscular sensory neurons.

Its subcellular location is the cytoplasm. The protein resides in the cytoskeleton. It is found in the cell projection. The protein localises to the axon. It localises to the perikaryon. Functionally, class-III neuronal intermediate filament protein. My form an independent structural network without the involvement of other neurofilaments or may cooperate with the neuronal intermediate filament proteins NEFL, NEFH, NEFM and INA to form a filamentous network. Assembly of the neuronal intermediate filaments may be regulated by RAB7A. Plays a role in the development of unmyelinated sensory neurons. May be involved in axon elongation and axon regeneration after injury. Inhibits neurite extension in type II spiral ganglion neurons in the cochlea. The sequence is that of Peripherin (Prph) from Rattus norvegicus (Rat).